A 131-amino-acid polypeptide reads, in one-letter code: Inner membrane protein YecN (131 aa).

Over 1–107 the chain is Cytoplasmic; sequence MVSALYAVLS…RWRRSGMSAT (107 aa). A helical transmembrane segment spans residues 108–128; that stretch reads WCALLLMVLANLWYMPWELVF. The Periplasmic segment spans residues 129 to 131; the sequence is SLR.

It localises to the cell inner membrane. In Escherichia coli O6:H1 (strain CFT073 / ATCC 700928 / UPEC), this protein is Inner membrane protein YecN (yecN).